The primary structure comprises 115 residues: Large ribosomal subunit protein uL23 (115 aa).

Belongs to the universal ribosomal protein uL23 family. As to quaternary structure, part of the 50S ribosomal subunit. Contacts protein L29, and trigger factor when it is bound to the ribosome.

Functionally, one of the early assembly proteins it binds 23S rRNA. One of the proteins that surrounds the polypeptide exit tunnel on the outside of the ribosome. Forms the main docking site for trigger factor binding to the ribosome. This is Large ribosomal subunit protein uL23 from Granulibacter bethesdensis (strain ATCC BAA-1260 / CGDNIH1).